A 286-amino-acid polypeptide reads, in one-letter code: ATP phosphoribosyltransferase (286 aa).

This sequence belongs to the ATP phosphoribosyltransferase family. Long subfamily. The cofactor is Mg(2+).

The protein localises to the cytoplasm. It carries out the reaction 1-(5-phospho-beta-D-ribosyl)-ATP + diphosphate = 5-phospho-alpha-D-ribose 1-diphosphate + ATP. It functions in the pathway amino-acid biosynthesis; L-histidine biosynthesis; L-histidine from 5-phospho-alpha-D-ribose 1-diphosphate: step 1/9. Feedback inhibited by histidine. Its function is as follows. Catalyzes the condensation of ATP and 5-phosphoribose 1-diphosphate to form N'-(5'-phosphoribosyl)-ATP (PR-ATP). Has a crucial role in the pathway because the rate of histidine biosynthesis seems to be controlled primarily by regulation of HisG enzymatic activity. This is ATP phosphoribosyltransferase from Paenarthrobacter aurescens (strain TC1).